A 215-amino-acid chain; its full sequence is Osmoprotectant import permease protein OsmW (215 aa).

The ABC transmembrane type-1 domain occupies 18-202 (TFQHLWLVAL…LLAIVLDWLL (185 aa)). 6 helical membrane passes run 24-44 (LVALAVGLAIIIGVPLGVLIV), 51-73 (TPVLGAATLLLTIPSIALFGLMI), 78-100 (LIGHGIGVLPAVTAVFLYSLLPI), 132-152 (WVEIPMALPVIFGGIRTAVVM), 153-173 (NIGVMAIAAVIGAGGLGLLLL), and 183-203 (MLIAGALMICLLAIVLDWLLH).

It belongs to the binding-protein-dependent transport system permease family. As to quaternary structure, the complex is composed of two ATP-binding proteins (OsmV), two transmembrane proteins (OsmW and OsmY) and a solute-binding protein (OsmX).

The protein localises to the cell inner membrane. Functionally, part of the OsmU ABC transporter complex, which is involved in the uptake of osmoprotectants such as choline-O-sulfate and glycine betaine. Probably responsible for the translocation of the substrate across the membrane. The protein is Osmoprotectant import permease protein OsmW (osmW) of Salmonella typhimurium (strain LT2 / SGSC1412 / ATCC 700720).